The chain runs to 570 residues: Proline--tRNA ligase (570 aa).

It belongs to the class-II aminoacyl-tRNA synthetase family. ProS type 1 subfamily. As to quaternary structure, homodimer.

The protein resides in the cytoplasm. The enzyme catalyses tRNA(Pro) + L-proline + ATP = L-prolyl-tRNA(Pro) + AMP + diphosphate. Functionally, catalyzes the attachment of proline to tRNA(Pro) in a two-step reaction: proline is first activated by ATP to form Pro-AMP and then transferred to the acceptor end of tRNA(Pro). As ProRS can inadvertently accommodate and process non-cognate amino acids such as alanine and cysteine, to avoid such errors it has two additional distinct editing activities against alanine. One activity is designated as 'pretransfer' editing and involves the tRNA(Pro)-independent hydrolysis of activated Ala-AMP. The other activity is designated 'posttransfer' editing and involves deacylation of mischarged Ala-tRNA(Pro). The misacylated Cys-tRNA(Pro) is not edited by ProRS. In Neisseria meningitidis serogroup B (strain ATCC BAA-335 / MC58), this protein is Proline--tRNA ligase.